Reading from the N-terminus, the 158-residue chain is Large ribosomal subunit protein uL30 (158 aa).

It belongs to the universal ribosomal protein uL30 family. As to quaternary structure, part of the 50S ribosomal subunit.

The polypeptide is Large ribosomal subunit protein uL30 (Sulfurisphaera tokodaii (strain DSM 16993 / JCM 10545 / NBRC 100140 / 7) (Sulfolobus tokodaii)).